The following is a 332-amino-acid chain: tRNA-dihydrouridine(20/20a) synthase (332 aa).

FMN-binding positions include P19–L21 and Q71. The Proton donor role is filled by C101. Residues K140, H173, N213 to G215, and G235 to R236 each bind FMN.

The protein belongs to the Dus family. DusA subfamily. FMN serves as cofactor.

It carries out the reaction 5,6-dihydrouridine(20) in tRNA + NADP(+) = uridine(20) in tRNA + NADPH + H(+). The enzyme catalyses 5,6-dihydrouridine(20) in tRNA + NAD(+) = uridine(20) in tRNA + NADH + H(+). The catalysed reaction is 5,6-dihydrouridine(20a) in tRNA + NADP(+) = uridine(20a) in tRNA + NADPH + H(+). It catalyses the reaction 5,6-dihydrouridine(20a) in tRNA + NAD(+) = uridine(20a) in tRNA + NADH + H(+). In terms of biological role, catalyzes the synthesis of 5,6-dihydrouridine (D), a modified base found in the D-loop of most tRNAs, via the reduction of the C5-C6 double bond in target uridines. Specifically modifies U20 and U20a in tRNAs. In Salmonella typhi, this protein is tRNA-dihydrouridine(20/20a) synthase.